A 130-amino-acid chain; its full sequence is Small ribosomal subunit protein uS9 (130 aa).

Belongs to the universal ribosomal protein uS9 family.

This Shigella dysenteriae serotype 1 (strain Sd197) protein is Small ribosomal subunit protein uS9.